A 54-amino-acid chain; its full sequence is Potassium channel toxin alpha-KTx 14.x (54 aa).

The first 23 residues, 1 to 23 (MKIFFAILLILAVCSMAIWTVNG), serve as a signal peptide directing secretion. 3 disulfide bridges follow: C30–C46, C36–C51, and C40–C53.

Belongs to the short scorpion toxin superfamily. Potassium channel inhibitor family. Alpha-KTx 14 subfamily. As to expression, expressed by the venom gland.

It localises to the secreted. Potassium channels inhibitor. This Olivierus martensii (Manchurian scorpion) protein is Potassium channel toxin alpha-KTx 14.x.